The chain runs to 227 residues: MAHPVQLSLQDATSPIMEELITFHDHAFMAMSLISFLVLYALALTLTTKLTNTNITDAQEMETIWTILPAVILILIALPSLRVLYLTDEVNDPSLTIKSIGHQWYWTYEYTDYGGLIFNSYMLPPLFLKPGDLRLLEVDNRVVLPIEAPVRMMITSQDVLHSWTIPTLGLKTDAVPGRLNQTVFTATRPGVYYGQCSEICGANHSFMPIVADLIPLKIFEMGPVFTL.

Over methionine 1–serine 14 the chain is Mitochondrial intermembrane. A helical membrane pass occupies residues proline 15 to threonine 45. The Mitochondrial matrix portion of the chain corresponds to leucine 46–glutamine 59. The chain crosses the membrane as a helical span at residues glutamate 60–threonine 87. Residues aspartate 88–leucine 227 lie on the Mitochondrial intermembrane side of the membrane. Residues histidine 161, cysteine 196, glutamate 198, cysteine 200, histidine 204, and methionine 207 each coordinate Cu cation. Mg(2+) is bound at residue glutamate 198.

It belongs to the cytochrome c oxidase subunit 2 family. Component of the cytochrome c oxidase (complex IV, CIV), a multisubunit enzyme composed of 14 subunits. The complex is composed of a catalytic core of 3 subunits MT-CO1, MT-CO2 and MT-CO3, encoded in the mitochondrial DNA, and 11 supernumerary subunits COX4I, COX5A, COX5B, COX6A, COX6B, COX6C, COX7A, COX7B, COX7C, COX8 and NDUFA4, which are encoded in the nuclear genome. The complex exists as a monomer or a dimer and forms supercomplexes (SCs) in the inner mitochondrial membrane with NADH-ubiquinone oxidoreductase (complex I, CI) and ubiquinol-cytochrome c oxidoreductase (cytochrome b-c1 complex, complex III, CIII), resulting in different assemblies (supercomplex SCI(1)III(2)IV(1) and megacomplex MCI(2)III(2)IV(2)). Found in a complex with TMEM177, COA6, COX18, COX20, SCO1 and SCO2. Interacts with TMEM177 in a COX20-dependent manner. Interacts with COX20. Interacts with COX16. Cu cation is required as a cofactor.

It localises to the mitochondrion inner membrane. The catalysed reaction is 4 Fe(II)-[cytochrome c] + O2 + 8 H(+)(in) = 4 Fe(III)-[cytochrome c] + 2 H2O + 4 H(+)(out). Component of the cytochrome c oxidase, the last enzyme in the mitochondrial electron transport chain which drives oxidative phosphorylation. The respiratory chain contains 3 multisubunit complexes succinate dehydrogenase (complex II, CII), ubiquinol-cytochrome c oxidoreductase (cytochrome b-c1 complex, complex III, CIII) and cytochrome c oxidase (complex IV, CIV), that cooperate to transfer electrons derived from NADH and succinate to molecular oxygen, creating an electrochemical gradient over the inner membrane that drives transmembrane transport and the ATP synthase. Cytochrome c oxidase is the component of the respiratory chain that catalyzes the reduction of oxygen to water. Electrons originating from reduced cytochrome c in the intermembrane space (IMS) are transferred via the dinuclear copper A center (CU(A)) of subunit 2 and heme A of subunit 1 to the active site in subunit 1, a binuclear center (BNC) formed by heme A3 and copper B (CU(B)). The BNC reduces molecular oxygen to 2 water molecules using 4 electrons from cytochrome c in the IMS and 4 protons from the mitochondrial matrix. The protein is Cytochrome c oxidase subunit 2 (MT-CO2) of Macaca fascicularis (Crab-eating macaque).